A 429-amino-acid chain; its full sequence is Ribosomal RNA small subunit methyltransferase B (429 aa).

Residues 254–260 (CAAPGGK), Asp277, Asp303, and Asp322 contribute to the S-adenosyl-L-methionine site. Cys375 (nucleophile) is an active-site residue. Positions 397–419 (ALSETGTPDQPGQQNLPGGEEGD) are disordered. The span at 400–412 (ETGTPDQPGQQNL) shows a compositional bias: polar residues.

It belongs to the class I-like SAM-binding methyltransferase superfamily. RsmB/NOP family.

Its subcellular location is the cytoplasm. It catalyses the reaction cytidine(967) in 16S rRNA + S-adenosyl-L-methionine = 5-methylcytidine(967) in 16S rRNA + S-adenosyl-L-homocysteine + H(+). Functionally, specifically methylates the cytosine at position 967 (m5C967) of 16S rRNA. The polypeptide is Ribosomal RNA small subunit methyltransferase B (Salmonella agona (strain SL483)).